We begin with the raw amino-acid sequence, 734 residues long: MALRFPRFSQGLAQDPTTRRIWFGIATAHDFESHDDITEERLYQNIFASHFGQLAIIFLWTSGNLFHVAWQGNFESWVKDPLHVRPIAHAIWDPHFGQPAVEAFTRGGAFGPVNISYSGVYQWWYTIGLRTNEDLYTGALFLLFLSAISLVAGWLHLQPKWKPSVSWFKNAESRLNHHLSGLFGVSSLAWTGHLVHVAIPGSRGEYVRWNNFLDVLPYPQGLTPLFTGQWNLYAQNPDSGSHLFGTSQGSGTAILTLLGGFHPQTQSLWLTDIAHHHLAIAFIFLVAGHMYRTNFGIGHSMKDLLEAHTPPGGRLGRGHKGLYDTINNSLHFQLGLALASLGVITSLVAQHMYSLPAYAFIAQDFTSQAALYTHHQYIAGFIMTGAFAHGAIFFIRDYNPEQNEDNVLARMLDHKEAIISHLSWASLFLGFHTLGLYVHNDVMLAFGTPEKQILIEPIFAQWIQSAHGKTSYGFDILLSSTNGPAFNAGRSIWLPGWLSAVNDNSNSLFLTIGPGDFLVHHAIALGLHTTTLILVKGALDARGSKLMPDKKDFGYSFPCDGPGRGGTCDISAWDAFYLAVFWMLNTIGWVTFYWHWKHITLWQGNVSQFNESSTYLMGWLRDYLWLNSSQLINGYNPFGMNSLSVWAWMFLFGHLVWATGFMFLISWRGYWQELIETLAWAHERTPLANLIRWRDKPVALSIVQARLVGLAHFSVGYIFTYAAFLIASTSGKFG.

8 helical membrane-spanning segments follow: residues 46–69, 135–158, 175–199, 273–291, 330–353, 369–395, 417–439, and 517–535; these read IFAS…FHVA, LYTG…LHLQ, LNHH…HVAI, IAHH…GHMY, LHFQ…QHMY, AALY…IFFI, AIIS…LYVH, and FLVH…LILV. Residues Cys559 and Cys568 each contribute to the [4Fe-4S] cluster site. The next 2 membrane-spanning stretches (helical) occupy residues 575–596 and 643–665; these read AFYL…YWHW and LSVW…MFLI. Chlorophyll a-binding residues include His654, Met662, and Tyr670. Trp671 is a binding site for phylloquinone. The helical transmembrane segment at 707-727 threads the bilayer; sequence LVGLAHFSVGYIFTYAAFLIA.

The protein belongs to the PsaA/PsaB family. In terms of assembly, the PsaA/B heterodimer binds the P700 chlorophyll special pair and subsequent electron acceptors. PSI consists of a core antenna complex that captures photons, and an electron transfer chain that converts photonic excitation into a charge separation. The eukaryotic PSI reaction center is composed of at least 11 subunits. P700 is a chlorophyll a/chlorophyll a' dimer, A0 is one or more chlorophyll a, A1 is one or both phylloquinones and FX is a shared 4Fe-4S iron-sulfur center. serves as cofactor.

The protein resides in the plastid. The protein localises to the chloroplast thylakoid membrane. The catalysed reaction is reduced [plastocyanin] + hnu + oxidized [2Fe-2S]-[ferredoxin] = oxidized [plastocyanin] + reduced [2Fe-2S]-[ferredoxin]. Its function is as follows. PsaA and PsaB bind P700, the primary electron donor of photosystem I (PSI), as well as the electron acceptors A0, A1 and FX. PSI is a plastocyanin-ferredoxin oxidoreductase, converting photonic excitation into a charge separation, which transfers an electron from the donor P700 chlorophyll pair to the spectroscopically characterized acceptors A0, A1, FX, FA and FB in turn. Oxidized P700 is reduced on the lumenal side of the thylakoid membrane by plastocyanin. The sequence is that of Photosystem I P700 chlorophyll a apoprotein A2 from Piper cenocladum (Ant piper).